Consider the following 270-residue polypeptide: FKBP-type peptidyl-prolyl cis-trans isomerase FkpA (270 aa).

Residues 1-25 (MKSLFKVTLLATTMAVALHAPITFA) form the signal peptide. The region spanning 164–249 (SDTVVVNYKG…VFDVELLDVK (86 aa)) is the PPIase FKBP-type domain.

The protein belongs to the FKBP-type PPIase family.

It localises to the periplasm. The catalysed reaction is [protein]-peptidylproline (omega=180) = [protein]-peptidylproline (omega=0). PPIases accelerate the folding of proteins. It catalyzes the cis-trans isomerization of proline imidic peptide bonds in oligopeptides. In Escherichia coli O157:H7, this protein is FKBP-type peptidyl-prolyl cis-trans isomerase FkpA (fkpA).